The sequence spans 4910 residues: Midasin (4910 aa).

AAA-ATPase protomer stretches follow at residues 305 to 528 (IQNS…DILF) and 636 to 975 (MEQI…TDII). ATP-binding positions include 315–322 (GKAGSGKT) and 653–660 (GETGTGKT). The tract at residues 695 to 803 (VNSKTVAVPI…KKFEAQSSSI (109 aa)) is interaction with RIX1. Thr1026 is subject to Phosphothreonine. 4 AAA-ATPase protomer regions span residues 1054 to 1280 (HYII…WALR), 1345 to 1624 (KGMR…VEFI), 1732 to 1985 (RVVR…QLLI), and 2036 to 2286 (VYES…DELH). ATP is bound by residues 1083-1090 (GPTSSGKT), 1368-1375 (GETGCGKT), 1747-1754 (GSPGVGKT), and 2054-2061 (GPSNSGKT). Positions 2372–4075 (EVGKWANNVL…DGEGAQNNNK (1704 aa)) are linker. Ser2971 is subject to Phosphoserine. 3 disordered regions span residues 4045–4547 (SPQP…EKMD), 4555–4574 (SDIDAHDANNDVDSKKSGFI), and 4579–4600 (SEEDFENELSNEHFSADQEDDS). Residues 4078–4088 (EQDEDLTEDAQ) show a composition bias toward acidic residues. Basic and acidic residues predominate over residues 4089 to 4098 (NENKEQQDKD). Residues 4099–4154 (ERDDENEDDAVEMEGDMAGELEDLSNGEENDDEDTDSEEEELDEEIDDLNEDDPNA) show a composition bias toward acidic residues. Residues 4155 to 4174 (IDDKMWDDKASDNSKEKDTD) are compositionally biased toward basic and acidic residues. Composition is skewed to acidic residues over residues 4202-4244 (GDED…EDLE), 4251-4274 (ETLDLPEDMNLDSEHEESDEDVDM), and 4288-4358 (GNED…EEEL). Ser4353 carries the phosphoserine modification. Basic and acidic residues predominate over residues 4359-4372 (KQDAAMEENKEKGG). Phosphothreonine is present on Thr4388. Composition is skewed to basic and acidic residues over residues 4435-4447 (DVTKNNEESREEA) and 4481-4495 (LEKNNERPDEFEHVE). The segment covering 4498–4516 (NTETDTQALGSATQDQLQT) has biased composition (polar residues). Positions 4517 to 4531 (IDEDMAIDDDREEQE) are enriched in acidic residues. Residue Ser4555 is modified to Phosphoserine. Residues 4557-4570 (IDAHDANNDVDSKK) show a composition bias toward basic and acidic residues. Positions 4704–4899 (QIMIALDDSK…SELPEMLSLI (196 aa)) constitute a VWFA domain.

This sequence belongs to the midasin family. In terms of assembly, associates with pre-60S ribosomes in the nucleoplasm. Interacts (via its hexameric AAA ATPase ring) with the RIX1 complex (via RIX1); this interaction is crucial for recruitment of MDN1 to the pre-ribosomal particle. Interacts (via VWFA/MIDAS domain) with YTM1 (via UBL domain). Interacts (via VWFA/MIDAS domain) with RSA4 (via UBL domain).

It is found in the nucleus. The protein resides in the nucleolus. It localises to the nucleoplasm. Functionally, nuclear chaperone required for maturation and nuclear export of pre-60S ribosome subunits. Functions at successive maturation steps to remove ribosomal factors at critical transition points, first driving the exit of early pre-60S particles from the nucleolus and then driving late pre-60S particles from the nucleus. At an early stage in 60S maturation, mediates the dissociation of the NOP7 complex (YTM1-ERB1-NOP7) from early pre-60S particles, rendering them competent for export from the nucleolus to the nucleoplasm. Subsequently recruited to the nucleoplasmic particles through interaction with the RIX1 complex. This binding is only possible if the 5S RNP at the central protuberance has undergone the rotation to complete its maturation. After remodeling, removes the ribosome biogenesis factor RSA4 in an ATP hydrolysis-driven step from pre-60S ribosomal subunits, rendering them competent for export from the nucleoplasm to the cytoplasm. Activates the GTPase activity of NOG2, which disengages from the pre-60S particle upon GTP hydrolysis, thus freeing its binding site for the nuclear export factor NMD3. The protein is Midasin (MDN1) of Saccharomyces cerevisiae (strain ATCC 204508 / S288c) (Baker's yeast).